Reading from the N-terminus, the 130-residue chain is uncharacterized protein (130 aa).

Positions 1–20 (MFNCLTKLVILVCLKYVAKA) are cleaved as a signal peptide.

This is an uncharacterized protein from Saccharomyces cerevisiae (strain ATCC 204508 / S288c) (Baker's yeast).